Reading from the N-terminus, the 204-residue chain is Putative copper-binding protein (204 aa).

Cu cation is bound by residues Cys77, Cys81, and His166.

Belongs to the SCO1/2 family.

The protein is Putative copper-binding protein (scoP) of Stutzerimonas stutzeri (Pseudomonas stutzeri).